Consider the following 148-residue polypeptide: uncharacterized protein (148 aa).

3 helical membrane-spanning segments follow: residues 20–42 (YYSKTFFYFLNILGLVFIIIANY), 52–74 (YFLMQIGIISVISSMVIEAVRCY), and 118–135 (IIRYVPSTVITFIICTYI).

It localises to the cell membrane. This is an uncharacterized protein from Rickettsia prowazekii (strain Madrid E).